The following is a 262-amino-acid chain: Abhydrolase domain-containing protein ACTT2-1 (262 aa).

A Peroxisomal targeting signal type 1 motif is present at residues 260 to 262 (SKL).

This sequence belongs to the AB hydrolase superfamily. AKT2 hydrolase family.

It is found in the peroxisome. The protein operates within mycotoxin biosynthesis. Abhydrolase domain-containing protein; part of the gene clusters that mediate the biosynthesis of the host-selective toxins (HSTs) ACT-toxins responsible for brown spot of tangerine disease by the tangerine pathotype which affects tangerines and mandarins. ACT-toxins consist of three moieties, 9,10-epoxy-8-hydroxy-9-methyl-decatrienoic acid (EDA), valine and a polyketide. ACT-toxin I is toxic to both citrus and pear; toxin II the 5''-deoxy derivative of ACT-toxin I, is highly toxic to pear and slightly toxic to citrus. On cellular level, ACT-toxins affect plasma membrane of susceptible cells and cause a sudden increase in loss of K(+) after a few minutes of toxin treatment. The acyl-CoA ligase ACTT1, the hydrolase ACTT2, the enoyl-CoA hydratases ACTT3 and ACTT6, and the acyl-CoA synthetase ACTT5 are all involved in the biosynthesis of the AK-, AF- and ACT-toxin common 9,10-epoxy-8-hydroxy-9-methyl-decatrienoic acid (EDA) structural moiety. The exact role of each enzyme, and of additional enzymes identified within the AF-toxin clusters have still to be determined. On the other hand, ACTTS1 to ACTTS4 are specific to the tangerine pathotype. The function of ACTTS3 is to elongate the polyketide chain portion of ACT-toxin that is unique to this toxin. The enoyl-reductase ACTTS2 might complement the missing enoyl-reductase (ER) domain in ACTTS3 in the synthesis of the polyketide portion of ACT-toxin. The roles of the nonribosomal peptide synthetases-related proteins ACTTS1 and ACTTS4 have also still not been elucidated. In Alternaria alternata (Alternaria rot fungus), this protein is Abhydrolase domain-containing protein ACTT2-1.